The primary structure comprises 107 residues: Glutaredoxin 4 (107 aa).

The region spanning 4-106 (IDKIKQQINE…TLLKETATKH (103 aa)) is the Glutaredoxin domain. Lys-21 serves as a coordination point for glutathione. Cys-29 is a [2Fe-2S] cluster binding site. Glutathione is bound by residues Arg-58, Phe-70, and 83–84 (CD).

The protein belongs to the glutaredoxin family. Monothiol subfamily. Homodimer.

Its subcellular location is the cytoplasm. Functionally, monothiol glutaredoxin involved in the biogenesis of iron-sulfur clusters. This is Glutaredoxin 4 (grxD) from Haemophilus ducreyi (strain 35000HP / ATCC 700724).